Here is a 476-residue protein sequence, read N- to C-terminus: ATP synthase subunit beta (476 aa).

An ATP-binding site is contributed by 152–159 (GGAGVGKT).

It belongs to the ATPase alpha/beta chains family. As to quaternary structure, F-type ATPases have 2 components, CF(1) - the catalytic core - and CF(0) - the membrane proton channel. CF(1) has five subunits: alpha(3), beta(3), gamma(1), delta(1), epsilon(1). CF(0) has three main subunits: a(1), b(2) and c(9-12). The alpha and beta chains form an alternating ring which encloses part of the gamma chain. CF(1) is attached to CF(0) by a central stalk formed by the gamma and epsilon chains, while a peripheral stalk is formed by the delta and b chains.

It localises to the cell inner membrane. It catalyses the reaction ATP + H2O + 4 H(+)(in) = ADP + phosphate + 5 H(+)(out). Functionally, produces ATP from ADP in the presence of a proton gradient across the membrane. The catalytic sites are hosted primarily by the beta subunits. The chain is ATP synthase subunit beta from Granulibacter bethesdensis (strain ATCC BAA-1260 / CGDNIH1).